Consider the following 134-residue polypeptide: MDHTSSVGLRKTGRRKCAVAQVRIIEGTGQLTINQRPGVPYLQYNPAYLLAAQGALDVTELTNRYDTIVKTKGGGLTGQAEAIKLGLARALCSLHIKHRKALKPQGYLTRNPLRKERKKYGLKKARKAPQFSKR.

The interval 105 to 134 is disordered; the sequence is QGYLTRNPLRKERKKYGLKKARKAPQFSKR. The segment covering 115 to 134 has biased composition (basic residues); that stretch reads KERKKYGLKKARKAPQFSKR.

This sequence belongs to the universal ribosomal protein uS9 family.

It localises to the plastid. It is found in the chloroplast. This Nephroselmis olivacea (Green alga) protein is Small ribosomal subunit protein uS9c (rps9).